The primary structure comprises 330 residues: DNA-directed RNA polymerase I subunit RPA43 (330 aa).

The tract at residues 251 to 330 (ADVTDVTPQE…ANFESPKKRQ (80 aa)) is disordered. Residues Ser-306, Ser-318, and Ser-325 each carry the phosphoserine modification. A compositionally biased stretch (basic and acidic residues) spans 317 to 330 (HSEEANFESPKKRQ).

The protein belongs to the eukaryotic RPA43 RNA polymerase subunit family. As to quaternary structure, component of the RNA polymerase I (Pol I) complex consisting of 13 subunits: a ten-subunit catalytic core composed of POLR1A/RPA1, POLR1B/RPA2, POLR1C/RPAC1, POLR1D/RPAC2, POLR1H/RPA12, POLR2E/RPABC1, POLR2F/RPABC2, POLR2H/RPABC3, POLR2K/RPABC4 and POLR2L/RPABC5; a mobile stalk subunit POLR1F/RPA43 protruding from the core and additional subunits homologous to general transcription factors POLR1E/RPA49 and POLR1G/RPA34. Interacts with RRN3/TIF-IA. Interacts with RRN3/TIF-IA. In terms of tissue distribution, widely expressed.

Its subcellular location is the nucleus. It is found in the nucleolus. Its function is as follows. Component of RNA polymerase I (Pol I), a DNA-dependent RNA polymerase which synthesizes ribosomal RNA precursors using the four ribonucleoside triphosphates as substrates. Through its association with RRN3/TIF-IA may be involved in recruitment of Pol I to rDNA promoters. This is DNA-directed RNA polymerase I subunit RPA43 from Mus musculus (Mouse).